The following is a 367-amino-acid chain: Alanine racemase (367 aa).

Residue K40 is the Proton acceptor; specific for D-alanine of the active site. Residue K40 is modified to N6-(pyridoxal phosphate)lysine. R136 is a substrate binding site. The active-site Proton acceptor; specific for L-alanine is Y263. Residue M310 participates in substrate binding.

This sequence belongs to the alanine racemase family. It depends on pyridoxal 5'-phosphate as a cofactor.

The enzyme catalyses L-alanine = D-alanine. It functions in the pathway amino-acid biosynthesis; D-alanine biosynthesis; D-alanine from L-alanine: step 1/1. Catalyzes the interconversion of L-alanine and D-alanine. May also act on other amino acids. This is Alanine racemase (alr) from Streptococcus pneumoniae (strain ATCC 700669 / Spain 23F-1).